Reading from the N-terminus, the 530-residue chain is Inactive ubiquitin carboxyl-terminal hydrolase 17-like protein 7 (530 aa).

In terms of domain architecture, USP spans 80–375; that stretch reads AGLQKIGNTF…QAYVLFYIQK (296 aa). The segment covering 382–392 has biased composition (basic and acidic residues); that stretch reads SESVSRGREPR. 3 disordered regions span residues 382-412, 431-454, and 490-530; these read SESVSRGREPRALGAEDTDRPATQGELKRDH, ESTLDHWKFPQEQNKTKPEFNVRK, and SSTK…LVCQ. Residues 490–512 show a composition bias toward polar residues; it reads SSTKPTDQESMNTGTLASLQGST. The span at 513 to 524 shows a compositional bias: basic residues; sequence RRSKGNNKHSKR.

Belongs to the peptidase C19 family. USP17 subfamily.

The protein resides in the nucleus. It is found in the endoplasmic reticulum. This chain is Inactive ubiquitin carboxyl-terminal hydrolase 17-like protein 7 (USP17L7), found in Homo sapiens (Human).